The following is a 240-amino-acid chain: UDP-2,3-diacylglucosamine hydrolase (240 aa).

Mn(2+) contacts are provided by Asp8, His10, Asp41, Asn79, and His114. Substrate is bound at residue 79–80; sequence NR. Substrate-binding residues include Asp122, Ser160, Asn164, Lys167, and His195. Residues His195 and His197 each coordinate Mn(2+).

It belongs to the LpxH family. Requires Mn(2+) as cofactor.

It is found in the cell inner membrane. It catalyses the reaction UDP-2-N,3-O-bis[(3R)-3-hydroxytetradecanoyl]-alpha-D-glucosamine + H2O = 2-N,3-O-bis[(3R)-3-hydroxytetradecanoyl]-alpha-D-glucosaminyl 1-phosphate + UMP + 2 H(+). Its pathway is glycolipid biosynthesis; lipid IV(A) biosynthesis; lipid IV(A) from (3R)-3-hydroxytetradecanoyl-[acyl-carrier-protein] and UDP-N-acetyl-alpha-D-glucosamine: step 4/6. In terms of biological role, hydrolyzes the pyrophosphate bond of UDP-2,3-diacylglucosamine to yield 2,3-diacylglucosamine 1-phosphate (lipid X) and UMP by catalyzing the attack of water at the alpha-P atom. Involved in the biosynthesis of lipid A, a phosphorylated glycolipid that anchors the lipopolysaccharide to the outer membrane of the cell. The chain is UDP-2,3-diacylglucosamine hydrolase from Escherichia coli O7:K1 (strain IAI39 / ExPEC).